Here is a 555-residue protein sequence, read N- to C-terminus: Urocanate hydratase (555 aa).

Residues 52–53, Q130, 176–178, E196, R201, 242–243, 263–267, 273–274, and Y322 each bind NAD(+); these read GG, GMG, NA, QTSAH, and YL. The active site involves C410. G492 is an NAD(+) binding site.

Belongs to the urocanase family. Requires NAD(+) as cofactor.

The protein resides in the cytoplasm. The enzyme catalyses 4-imidazolone-5-propanoate = trans-urocanate + H2O. It functions in the pathway amino-acid degradation; L-histidine degradation into L-glutamate; N-formimidoyl-L-glutamate from L-histidine: step 2/3. Functionally, catalyzes the conversion of urocanate to 4-imidazolone-5-propionate. In Shewanella baltica (strain OS185), this protein is Urocanate hydratase.